The sequence spans 624 residues: Bifunctional protein ArgH (624 aa).

The segment at 1-466 (MALWGGRFSQ…QERDNAGVKV (466 aa)) is argininosuccinate lyase. In terms of domain architecture, N-acetyltransferase spans 464–614 (VKVRPARLTD…DEVALEVNLQ (151 aa)). Residues 467–624 (RPARLTDLDA…EQVIIKSSVA (158 aa)) are probable acetyltransferase.

This sequence in the N-terminal section; belongs to the lyase 1 family. Argininosuccinate lyase subfamily.

It localises to the cytoplasm. The enzyme catalyses 2-(N(omega)-L-arginino)succinate = fumarate + L-arginine. Its pathway is amino-acid biosynthesis; L-arginine biosynthesis; L-arginine from L-ornithine and carbamoyl phosphate: step 3/3. The chain is Bifunctional protein ArgH (argH) from Aliivibrio fischeri (strain ATCC 700601 / ES114) (Vibrio fischeri).